The following is a 274-amino-acid chain: Ribosomal RNA small subunit methyltransferase A (274 aa).

Positions 15, 17, 42, 64, 89, and 108 each coordinate S-adenosyl-L-methionine.

It belongs to the class I-like SAM-binding methyltransferase superfamily. rRNA adenine N(6)-methyltransferase family. RsmA subfamily.

It localises to the cytoplasm. It carries out the reaction adenosine(1518)/adenosine(1519) in 16S rRNA + 4 S-adenosyl-L-methionine = N(6)-dimethyladenosine(1518)/N(6)-dimethyladenosine(1519) in 16S rRNA + 4 S-adenosyl-L-homocysteine + 4 H(+). Specifically dimethylates two adjacent adenosines (A1518 and A1519) in the loop of a conserved hairpin near the 3'-end of 16S rRNA in the 30S particle. May play a critical role in biogenesis of 30S subunits. The protein is Ribosomal RNA small subunit methyltransferase A of Prochlorococcus marinus (strain AS9601).